We begin with the raw amino-acid sequence, 420 residues long: Diphosphomevalonate decarboxylase 2 (420 aa).

25–28 (YWGK) serves as a coordination point for (R)-5-diphosphomevalonate. Positions 42-50 (SVTLDPDHL) match the Peroxisomal targeting signal PTS2 motif. Residues arginine 80, 163–168 (SGSACR), and threonine 219 contribute to the (R)-5-diphosphomevalonate site.

It belongs to the diphosphomevalonate decarboxylase family. Homodimer.

It is found in the peroxisome. The catalysed reaction is (R)-5-diphosphomevalonate + ATP = isopentenyl diphosphate + ADP + phosphate + CO2. It functions in the pathway isoprenoid biosynthesis; isopentenyl diphosphate biosynthesis via mevalonate pathway; isopentenyl diphosphate from (R)-mevalonate: step 3/3. Performs the first committed step in the biosynthesis of isoprene-containing compounds such as sterols and terpenoids. Component of the triterpenes (e.g. ginsenosides or panaxosides) and phytosterols biosynthetic pathways. Promotes the accumulation of stigmasterol and beta-sitosterol. In Panax ginseng (Korean ginseng), this protein is Diphosphomevalonate decarboxylase 2.